Reading from the N-terminus, the 112-residue chain is Ribonuclease VapC8 (112 aa).

A PINc domain is found at 10-109 (LLDTSVFIAR…TDALIAATAE (100 aa)). 2 residues coordinate Mg(2+): aspartate 12 and aspartate 101.

This sequence belongs to the PINc/VapC protein family. It depends on Mg(2+) as a cofactor.

In terms of biological role, toxic component of a type II toxin-antitoxin (TA) system. An RNase. The cognate antitoxin is VapB8. This Mycobacterium tuberculosis (strain CDC 1551 / Oshkosh) protein is Ribonuclease VapC8 (vapC8).